The primary structure comprises 445 residues: Phosphoglucosamine mutase (445 aa).

Serine 101 acts as the Phosphoserine intermediate in catalysis. Mg(2+) is bound by residues serine 101, aspartate 240, aspartate 242, and aspartate 244. The residue at position 101 (serine 101) is a Phosphoserine.

It belongs to the phosphohexose mutase family. Mg(2+) serves as cofactor. Post-translationally, activated by phosphorylation.

It carries out the reaction alpha-D-glucosamine 1-phosphate = D-glucosamine 6-phosphate. In terms of biological role, catalyzes the conversion of glucosamine-6-phosphate to glucosamine-1-phosphate. The polypeptide is Phosphoglucosamine mutase (Pseudomonas fluorescens (strain SBW25)).